The sequence spans 502 residues: L-arabinose isomerase (502 aa).

Mn(2+) is bound by residues Glu306, Glu333, His350, and His449.

The protein belongs to the arabinose isomerase family. Mn(2+) is required as a cofactor.

It catalyses the reaction beta-L-arabinopyranose = L-ribulose. Its pathway is carbohydrate degradation; L-arabinose degradation via L-ribulose; D-xylulose 5-phosphate from L-arabinose (bacterial route): step 1/3. Its function is as follows. Catalyzes the conversion of L-arabinose to L-ribulose. The chain is L-arabinose isomerase from Flavobacterium johnsoniae (strain ATCC 17061 / DSM 2064 / JCM 8514 / BCRC 14874 / CCUG 350202 / NBRC 14942 / NCIMB 11054 / UW101) (Cytophaga johnsonae).